Here is a 309-residue protein sequence, read N- to C-terminus: Thioredoxin reductase (309 aa).

An FAD-binding site is contributed by 35-42 (EKQFPGGK). An intrachain disulfide couples Cys-134 to Cys-137. 277–286 (DIVDKNVRQI) serves as a coordination point for FAD.

The protein belongs to the class-II pyridine nucleotide-disulfide oxidoreductase family. Homodimer. Requires FAD as cofactor.

The protein resides in the cytoplasm. It carries out the reaction [thioredoxin]-dithiol + NADP(+) = [thioredoxin]-disulfide + NADPH + H(+). The chain is Thioredoxin reductase (trxB) from Ureaplasma parvum serovar 3 (strain ATCC 700970).